The chain runs to 466 residues: Cysteine--tRNA ligase (466 aa).

C33 contacts Zn(2+). The 'HIGH' region motif lies at 35 to 45; the sequence is PTVYDFAHIGN. 3 residues coordinate Zn(2+): C221, H246, and E250. Positions 279–283 match the 'KMSKS' region motif; sequence KMSKS. K282 is a binding site for ATP.

This sequence belongs to the class-I aminoacyl-tRNA synthetase family. In terms of assembly, monomer. Requires Zn(2+) as cofactor.

The protein resides in the cytoplasm. It carries out the reaction tRNA(Cys) + L-cysteine + ATP = L-cysteinyl-tRNA(Cys) + AMP + diphosphate. The protein is Cysteine--tRNA ligase of Sinorhizobium medicae (strain WSM419) (Ensifer medicae).